We begin with the raw amino-acid sequence, 519 residues long: DNA damage-binding protein CMR1 (519 aa).

Residues 35–92 (AEAGLGPTGKSRAAASSKPRVKKPAPKKIKQEDIAPRRTSSRLKGIEADSEKAKRKAE) are disordered. Positions 53-62 (PRVKKPAPKK) are enriched in basic residues. Positions 78–92 (KGIEADSEKAKRKAE) are enriched in basic and acidic residues. WD repeat units follow at residues 240–280 (PHTR…AVEV), 287–327 (NEDQ…DQAE), 331–371 (LSEK…GKGD), 380–420 (EHES…EWAT), 442–485 (GRWV…LAQL), and 488–519 (DGIT…CLWM).

It belongs to the WD repeat DDB2/WDR76 family.

Its function is as follows. DNA-binding protein that binds to both single- and double-stranded DNA. Binds preferentially to UV-damaged DNA. May be involved in DNA-metabolic processes. The protein is DNA damage-binding protein CMR1 of Phaeosphaeria nodorum (strain SN15 / ATCC MYA-4574 / FGSC 10173) (Glume blotch fungus).